The primary structure comprises 382 residues: Mannitol-1-phosphate 5-dehydrogenase (382 aa).

3-14 contributes to the NAD(+) binding site; it reads ALHFGAGNIGRG.

Belongs to the mannitol dehydrogenase family.

It carries out the reaction D-mannitol 1-phosphate + NAD(+) = beta-D-fructose 6-phosphate + NADH + H(+). The sequence is that of Mannitol-1-phosphate 5-dehydrogenase from Salmonella agona (strain SL483).